Here is a 146-residue protein sequence, read N- to C-terminus: Large ribosomal subunit protein uL15 (146 aa).

Positions 1–13 are enriched in basic and acidic residues; it reads MKLHELKPAEGSR. Positions 1-52 are disordered; that stretch reads MKLHELKPAEGSRKVRNRVGRGIGSGNGKTAGKGHKGQNARSGGGVRLGFEG. 2 stretches are compositionally biased toward gly residues: residues 21-31 and 42-52; these read RGIGSGNGKTA and SGGGVRLGFEG.

Belongs to the universal ribosomal protein uL15 family. Part of the 50S ribosomal subunit.

In terms of biological role, binds to the 23S rRNA. This chain is Large ribosomal subunit protein uL15, found in Bacillus cereus (strain B4264).